Here is a 245-residue protein sequence, read N- to C-terminus: Protein ARV 1 (245 aa).

A run of 5 helical transmembrane segments spans residues 70–90 (INPATVNIQHLLWKLVFAYLL), 117–137 (IKVLIGVLSANAAFIISFAIA), 163–183 (IFLLAMLVWEFPMSVIFFVDI), 200–220 (TMTRCIAVCLIAHLIRFLVGQ), and 224–244 (PTIFLIQIGSLLQYMSYFFRI).

It belongs to the ARV1 family. In terms of tissue distribution, restricted to tissues in which cells are actively dividing or expanding. Mostly expressed in roots and flowers, and, to a lower extent, in stems and leaves.

It is found in the endoplasmic reticulum membrane. Its function is as follows. Mediator of sterol homeostasis involved in sterol uptake, trafficking and distribution into membranes. Also regulates the sphingolipid metabolism. The polypeptide is Protein ARV 1 (Arabidopsis thaliana (Mouse-ear cress)).